An 84-amino-acid chain; its full sequence is U1-hexatoxin-Iw1a (84 aa).

An N-terminal signal peptide occupies residues 1–18; sequence MLKFVVVICLVIMAITFA. Cystine bridges form between C21–C32, C26–C40, C31–C66, C50–C74, and C68–C81.

It belongs to the MIT-like AcTx family. Expressed by the venom gland.

The protein localises to the secreted. The chain is U1-hexatoxin-Iw1a from Illawarra wisharti (Illawarra funnel-web spider).